Consider the following 414-residue polypeptide: Cytochrome c biogenesis protein Ccs1 (414 aa).

3 consecutive transmembrane segments (helical) span residues 14–34 (LTVA…GTVI), 73–93 (SWWF…CTIT), and 159–179 (VSPI…MLST).

Belongs to the Ccs1/CcsB family. As to quaternary structure, may interact with CcsA.

The protein localises to the plastid. Its subcellular location is the chloroplast thylakoid membrane. Its function is as follows. Required during biogenesis of c-type cytochromes (cytochrome c6 and cytochrome f) at the step of heme attachment. This is Cytochrome c biogenesis protein Ccs1 from Guillardia theta (Cryptophyte).